The chain runs to 211 residues: Large ribosomal subunit protein bL9 (211 aa).

Residues 183–211 form a disordered region; it reads AAASEDEELAETAGVAPAEPSEEDDSAKA. The span at 202–211 shows a compositional bias: acidic residues; the sequence is PSEEDDSAKA.

This sequence belongs to the bacterial ribosomal protein bL9 family.

Functionally, binds to the 23S rRNA. The sequence is that of Large ribosomal subunit protein bL9 from Roseobacter denitrificans (strain ATCC 33942 / OCh 114) (Erythrobacter sp. (strain OCh 114)).